The chain runs to 367 residues: Probable protein phosphatase 2C 67 (367 aa).

The segment at 1 to 79 (MAHQKREATS…DEKAATNSNV (79 aa)) is disordered. Residues 31–46 (AEKEHILTSDASHETN) show a composition bias toward basic and acidic residues. Positions 91 to 365 (EADAAEDKGC…DNCTAVLIVF (275 aa)) constitute a PPM-type phosphatase domain. Mn(2+)-binding residues include D131, G132, D312, and D356.

This sequence belongs to the PP2C family. It depends on Mg(2+) as a cofactor. Mn(2+) is required as a cofactor.

It carries out the reaction O-phospho-L-seryl-[protein] + H2O = L-seryl-[protein] + phosphate. It catalyses the reaction O-phospho-L-threonyl-[protein] + H2O = L-threonyl-[protein] + phosphate. This is Probable protein phosphatase 2C 67 from Oryza sativa subsp. japonica (Rice).